Consider the following 241-residue polypeptide: Small ribosomal subunit protein uS2c (241 aa).

The protein belongs to the universal ribosomal protein uS2 family.

Its subcellular location is the plastid. The protein resides in the chloroplast. The sequence is that of Small ribosomal subunit protein uS2c (rps2) from Porphyra purpurea (Red seaweed).